The chain runs to 470 residues: Mucin-like protein 3 (470 aa).

Positions Met1–Ala29 are cleaved as a signal peptide. Over Asn30–Ala401 the chain is Extracellular. 2 disordered regions span residues Arg57–Pro234 and Thr248–Glu318. Residues Ser75–Thr87 are compositionally biased toward polar residues. Asn122 carries N-linked (GlcNAc...) asparagine glycosylation. Positions Ala132 to Gly152 are enriched in basic and acidic residues. The segment covering Thr169–Glu193 has biased composition (polar residues). Over residues Thr194–Arg203 the composition is skewed to basic and acidic residues. Residues Lys204 to Thr222 show a composition bias toward polar residues. Basic and acidic residues predominate over residues Lys260–Ser273. Over residues His283–Ser295 the composition is skewed to polar residues. A glycan (N-linked (GlcNAc...) asparagine) is linked at Asn325. The chain crosses the membrane as a helical span at residues Ile402 to Leu422. Residues Val423–Pro470 lie on the Cytoplasmic side of the membrane.

The protein localises to the cell membrane. The protein resides in the cytoplasm. In terms of biological role, may modulate NF-kappaB signaling and play a role in cell growth. This is Mucin-like protein 3 from Rattus norvegicus (Rat).